The primary structure comprises 812 residues: Probable inorganic carbon transporter subunit DabA (812 aa).

Residues Cys-337, Asp-339, His-499, and Cys-514 each contribute to the Zn(2+) site.

This sequence belongs to the inorganic carbon transporter (TC 9.A.2) DabA family. Forms a complex with DabB. The cofactor is Zn(2+).

Its subcellular location is the cell inner membrane. Functionally, part of an energy-coupled inorganic carbon pump. This chain is Probable inorganic carbon transporter subunit DabA, found in Xanthomonas oryzae pv. oryzae (strain KACC10331 / KXO85).